The sequence spans 499 residues: Na(+)/H(+) antiporter NhaB (499 aa).

11 consecutive transmembrane segments (helical) span residues 33–53 (PVIF…EFIF), 66–86 (PGGL…HTVY), 89–109 (VSGN…IYFM), 128–148 (AILS…LDAL), 237–257 (FIEF…AGLI), 305–325 (AIVA…VGLI), 326–346 (GLTV…HQIG), 349–369 (FEEA…VGVI), 393–413 (MFFI…VATV), 449–469 (ATPN…APLI), and 477–497 (VWMA…MIVI).

It belongs to the NhaB Na(+)/H(+) (TC 2.A.34) antiporter family.

It localises to the cell inner membrane. It catalyses the reaction 2 Na(+)(in) + 3 H(+)(out) = 2 Na(+)(out) + 3 H(+)(in). Functionally, na(+)/H(+) antiporter that extrudes sodium in exchange for external protons. This is Na(+)/H(+) antiporter NhaB from Hahella chejuensis (strain KCTC 2396).